Reading from the N-terminus, the 486-residue chain is FAD-dependent oxidoreductase domain-containing protein 1 (486 aa).

Residues 66–82 form a helical membrane-spanning segment; sequence VVIVGGGVLGLSVAYWL.

Associates with components of the mitochondrial respiratory chain complex I. The cofactor is FAD.

The protein resides in the mitochondrion inner membrane. Functionally, required for the assembly of the mitochondrial membrane respiratory chain NADH dehydrogenase (Complex I). Involved in mid-late stages of complex I assembly. In Bos taurus (Bovine), this protein is FAD-dependent oxidoreductase domain-containing protein 1 (FOXRED1).